Reading from the N-terminus, the 88-residue chain is Sec-independent protein translocase protein TatA (88 aa).

Residues 3–23 (IFGVGLPEVTVILILALLIFG) traverse the membrane as a helical segment. Positions 56–88 (MNEQDKDESPISIESNQTNEINQEKIDSENSKK) are disordered. The span at 67 to 76 (SIESNQTNEI) shows a compositional bias: polar residues. Basic and acidic residues predominate over residues 77–88 (NQEKIDSENSKK).

Belongs to the TatA/E family. As to quaternary structure, forms a complex with TatC.

Its subcellular location is the cell inner membrane. Part of the twin-arginine translocation (Tat) system that transports large folded proteins containing a characteristic twin-arginine motif in their signal peptide across membranes. TatA could form the protein-conducting channel of the Tat system. The sequence is that of Sec-independent protein translocase protein TatA from Prochlorococcus marinus (strain AS9601).